A 227-amino-acid chain; its full sequence is Uracil-DNA glycosylase (227 aa).

Asp-68 (proton acceptor) is an active-site residue.

The protein belongs to the uracil-DNA glycosylase (UDG) superfamily. UNG family.

The protein resides in the cytoplasm. The catalysed reaction is Hydrolyzes single-stranded DNA or mismatched double-stranded DNA and polynucleotides, releasing free uracil.. Its function is as follows. Excises uracil residues from the DNA which can arise as a result of misincorporation of dUMP residues by DNA polymerase or due to deamination of cytosine. This Mycolicibacterium paratuberculosis (strain ATCC BAA-968 / K-10) (Mycobacterium paratuberculosis) protein is Uracil-DNA glycosylase.